Reading from the N-terminus, the 326-residue chain is Glycerol-3-phosphate dehydrogenase [NAD(P)+] (326 aa).

Ser10, Phe11, Arg31, and Lys108 together coordinate NADPH. Sn-glycerol 3-phosphate is bound by residues Lys108, Gly136, and Ser138. Residue Ala140 participates in NADPH binding. Sn-glycerol 3-phosphate is bound by residues Lys191, Asp246, Ser256, Arg257, and Asn258. Catalysis depends on Lys191, which acts as the Proton acceptor. Arg257 contacts NADPH. NADPH-binding residues include Ile281 and Glu283.

The protein belongs to the NAD-dependent glycerol-3-phosphate dehydrogenase family.

It is found in the cytoplasm. It carries out the reaction sn-glycerol 3-phosphate + NAD(+) = dihydroxyacetone phosphate + NADH + H(+). It catalyses the reaction sn-glycerol 3-phosphate + NADP(+) = dihydroxyacetone phosphate + NADPH + H(+). It participates in membrane lipid metabolism; glycerophospholipid metabolism. Its function is as follows. Catalyzes the reduction of the glycolytic intermediate dihydroxyacetone phosphate (DHAP) to sn-glycerol 3-phosphate (G3P), the key precursor for phospholipid synthesis. The sequence is that of Glycerol-3-phosphate dehydrogenase [NAD(P)+] from Ehrlichia chaffeensis (strain ATCC CRL-10679 / Arkansas).